The following is a 406-amino-acid chain: NAC transcription factor NAM-B1 (406 aa).

Residues M1 to A11 show a composition bias toward polar residues. Residues M1–R40 are disordered. An NAC domain is found at L35 to K204. The DNA-binding element occupies V137–A210.

It localises to the nucleus. Functionally, transcription factor of the NAC family associated with the grain protein content (GPC). Sequences of the 11 European varieties of H.vulgare tested belongs to the same haplotype while the sequence found in H.spontaneum, an ancestor of the cultivated H.vulgare which has a higher GPC, belongs to an other haplotype. This is NAC transcription factor NAM-B1 (NAM-B1) from Hordeum vulgare subsp. spontaneum (Wild barley).